We begin with the raw amino-acid sequence, 492 residues long: Transmembrane protein 104 homolog (492 aa).

Over 1 to 18 the chain is Cytoplasmic; sequence MQSNTDSSGTSGTYSQTV. Residues 19–39 traverse the membrane as a helical segment; that stretch reads GLLYVFNLIVGTGALALPKAF. Over 40–45 the chain is Extracellular; sequence QSAGWL. A helical membrane pass occupies residues 46–66; sequence LSISLLTFSAFMSYVAATFVI. Residues 67–114 are Cytoplasmic-facing; sequence EALSVANAVLSKKRRVEYDDVVVADGPSTFEIAKKVEVSEMASMFLSK. The helical transmembrane segment at 115–135 threads the bilayer; that stretch reads VSLVFSYFAIIIYLFGDLAIY. Residues 136-177 lie on the Extracellular side of the membrane; that stretch reads STTVPKSAMNIVCSTINATIVKSSDPCHESWPEILTRMTVYR. An N-linked (GlcNAc...) asparagine glycan is attached at Asn-152. The helical transmembrane segment at 178 to 198 threads the bilayer; it reads FFVIVFVVVVCLPMVIAGITK. Residues 199–210 lie on the Cytoplasmic side of the membrane; sequence TRHIQIMTTLSR. The chain crosses the membrane as a helical span at residues 211–231; the sequence is WAAFILMISLATMQLSSQGAA. Topologically, residues 232–238 are extracellular; that stretch reads AHPPAYN. The chain crosses the membrane as a helical span at residues 239 to 259; it reads FHGFGSLFGCAVYAFMCHHSI. Over 260–275 the chain is Cytoplasmic; sequence PSLITPMRTKENVFGK. Residues 276-296 form a helical membrane-spanning segment; it reads IAVVYGIVGVFYFTLSLTGAF. The Extracellular portion of the chain corresponds to 297-325; the sequence is AFEHVQDIYTLNFLHDDNTSLVYSIIDYF. An N-linked (GlcNAc...) asparagine glycan is attached at Asn-314. A helical membrane pass occupies residues 326–346; that stretch reads LALFPIITLTSSYPIIALTLI. Residues 347-391 are Cytoplasmic-facing; that stretch reads NNFKVVKDILCPKTGQENESLLEADNQVEDNDTDDEREARNGNPK. Positions 367 to 382 are enriched in acidic residues; sequence LLEADNQVEDNDTDDE. Residues 367 to 387 form a disordered region; the sequence is LLEADNQVEDNDTDDEREARN. The helical transmembrane segment at 392-412 threads the bilayer; that stretch reads TIFDVLVPTLVLALPTFLSLL. Over 413–415 the chain is Extracellular; the sequence is TDD. A helical transmembrane segment spans residues 416–436; the sequence is MLLLASITGSFPGVAVQFAIP. At 437–466 the chain is on the cytoplasmic side; sequence CLLVTAARKHARSVLNFPVPRKNNSPFQSR. A helical membrane pass occupies residues 467–487; sequence FWIMLISSWAGFSMIMVLLNL. Residues 488 to 492 lie on the Extracellular side of the membrane; that stretch reads VGVKF.

This sequence belongs to the TMEM104 family.

Its subcellular location is the membrane. The chain is Transmembrane protein 104 homolog from Caenorhabditis briggsae.